A 901-amino-acid chain; its full sequence is Probable inorganic carbon transporter subunit DabA (901 aa).

4 residues coordinate Zn(2+): cysteine 424, aspartate 426, histidine 606, and cysteine 621.

This sequence belongs to the inorganic carbon transporter (TC 9.A.2) DabA family. In terms of assembly, forms a complex with DabB. Zn(2+) serves as cofactor.

Its subcellular location is the cell membrane. Part of an energy-coupled inorganic carbon pump. This Staphylococcus aureus (strain MSSA476) protein is Probable inorganic carbon transporter subunit DabA.